A 445-amino-acid polypeptide reads, in one-letter code: Trigger factor (445 aa).

In terms of domain architecture, PPIase FKBP-type spans 162-247 (GDQVTIDAIG…IKAVHTAEPT (86 aa)).

Belongs to the FKBP-type PPIase family. Tig subfamily.

The protein localises to the cytoplasm. The catalysed reaction is [protein]-peptidylproline (omega=180) = [protein]-peptidylproline (omega=0). Functionally, involved in protein export. Acts as a chaperone by maintaining the newly synthesized protein in an open conformation. Functions as a peptidyl-prolyl cis-trans isomerase. The protein is Trigger factor of Rickettsia peacockii (strain Rustic).